The following is a 611-amino-acid chain: Dual specificity protein phosphatase CDC14AB (611 aa).

Residues 23–178 (DLLGASEFIK…ALQHGFLNFE (156 aa)) form an a region. The interval 179–192 (TFDVNEYEHYERVE) is linker. The segment at 193–359 (NGDLNWITPG…HGDSLRSKQR (167 aa)) is b. The Tyrosine-protein phosphatase domain occupies 194–352 (GDLNWITPGK…KQASLWAHGD (159 aa)). C294 functions as the Phosphocysteine intermediate in the catalytic mechanism. A disordered region spans residues 408–611 (KLRALKGRRQ…PSLQSEYVQY (204 aa)). Residues 456–490 (SPLKSSKVPASSSSSSSSSSVSASAKRIGRSSSSS) are compositionally biased toward low complexity. A compositionally biased stretch (polar residues) spans 491 to 511 (TNLKSTRLASSLGNLYEPNTE). The span at 512–553 (SISSGKPPSPSSFTPHPVRTTYNYHYEVNNNNNQYSTTSSPS) shows a compositional bias: low complexity. Composition is skewed to polar residues over residues 554-569 (KSLG…SGAS) and 591-611 (GLST…YVQY).

The protein belongs to the protein-tyrosine phosphatase family. Non-receptor class CDC14 subfamily.

The protein localises to the nucleus. The protein resides in the cytoplasm. It localises to the cytoskeleton. Its subcellular location is the microtubule organizing center. It is found in the centrosome. The protein localises to the spindle pole. The protein resides in the spindle. It localises to the cell projection. Its subcellular location is the kinocilium. It catalyses the reaction O-phospho-L-tyrosyl-[protein] + H2O = L-tyrosyl-[protein] + phosphate. The enzyme catalyses O-phospho-L-seryl-[protein] + H2O = L-seryl-[protein] + phosphate. The catalysed reaction is O-phospho-L-threonyl-[protein] + H2O = L-threonyl-[protein] + phosphate. In terms of biological role, dual-specificity phosphatase. Required for centrosome separation and productive cytokinesis during cell division. Dephosphorylates SIRT2 around early anaphase. May dephosphorylate the APC subunit FZR1/CDH1, thereby promoting APC-FZR1 dependent degradation of mitotic cyclins and subsequent exit from mitosis. This is Dual specificity protein phosphatase CDC14AB (cdc14ab) from Danio rerio (Zebrafish).